The sequence spans 435 residues: Probable exopolygalacturonase B (435 aa).

The signal sequence occupies residues 1–15 (MKFFLATLFASAVSS). Asn-59, Asn-184, and Asn-224 each carry an N-linked (GlcNAc...) asparagine glycan. PbH1 repeat units lie at residues 208–239 (SKDV…DSLN), 240–261 (VDGL…SPKP), 262–283 (NTTN…SMGS), 294–315 (IEHA…RLKA), and 326–347 (INNI…VLDQ). The Proton donor role is filled by Asp-254. A disulfide bridge links Cys-256 with Cys-273. Asn-262 and Asn-274 each carry an N-linked (GlcNAc...) asparagine glycan. The active site involves His-277. N-linked (GlcNAc...) asparagine glycans are attached at residues Asn-301, Asn-328, Asn-365, and Asn-373. Residues 366 to 388 (VTNILFENISGTSSGKNGKVVAD) form a PbH1 6 repeat. Cys-391 and Cys-397 form a disulfide bridge. N-linked (GlcNAc...) asparagine glycosylation is present at Asn-406.

Belongs to the glycosyl hydrolase 28 family.

The protein localises to the secreted. The catalysed reaction is [(1-&gt;4)-alpha-D-galacturonosyl](n) + H2O = alpha-D-galacturonate + [(1-&gt;4)-alpha-D-galacturonosyl](n-1). Its function is as follows. Specific in hydrolyzing the terminal glycosidic bond of polygalacturonic acid and oligogalacturonates. This chain is Probable exopolygalacturonase B (pgxB), found in Aspergillus oryzae (strain ATCC 42149 / RIB 40) (Yellow koji mold).